The sequence spans 376 residues: Alpha-2,8-sialyltransferase 8E (376 aa).

Topologically, residues 1–17 are cytoplasmic; it reads MRYADPSANRDLLGNRT. Residues 18–38 form a helical; Signal-anchor for type II membrane protein membrane-spanning segment; it reads LLFIFICAFALVTLLQQILYG. At 39-376 the chain is on the lumenal side; sequence RNYIKRYFEF…RVHTGTCSCC (338 aa). N-linked (GlcNAc...) asparagine glycosylation is found at Asn56 and Asn96. Disulfide bonds link Cys164-Cys313 and Cys178-Cys373. Residues Asn192 and 214-216 each bind substrate; that span reads NPS. Residues Asn241 and Asn284 are each glycosylated (N-linked (GlcNAc...) asparagine). Residue 300–302 participates in substrate binding; that stretch reads STG. His348 serves as the catalytic Proton donor/acceptor.

It belongs to the glycosyltransferase 29 family.

The protein resides in the golgi apparatus membrane. It carries out the reaction a ganglioside GQ1c (d18:1(4E)) + CMP-N-acetyl-beta-neuraminate = a ganglioside GP1c (d18:1(4E)) + CMP + H(+). Its pathway is protein modification; protein glycosylation. Functionally, involved in the synthesis of gangliosides GD1c, GT1a, GQ1b, GP1c and GT3 from GD1a, GT1b, GM1b and GD3 respectively. The chain is Alpha-2,8-sialyltransferase 8E (ST8SIA5) from Pan troglodytes (Chimpanzee).